The primary structure comprises 736 residues: MDCNCFDPLLPADELLMKYQYISDFFIAVAYFSIPIELVYFVQKSAVFPYRWVLVQFGAFIVLCGATHLINLWTSTPHTRTVAMVMTTAKFSTAAVSCATAVMLVHIIPDLLSVKTRELFLKNKAAELDREMGLIRTQEETGRYVRMLTHEIRSTLDRHTILKTTLVELGRALQLEECALWMPTRTGVELQLSYTLHHQNPVGFTVPIQLPVINQVFSANCAVKISPNSAVARLRPTRKYIPGEVVAVRVPLLHLSNFQTNDWPELSPKSYALMVLMLPSNSARQWHVHELELVDVVADQVAVALSHAAILEESMRARDLLIEQNVALDLARREAETAVRARNDFLGVMNHEMRTPMHAVVALSSLLQESELIPEQRLMVETILKSSNLLATLINDVLDLSRLEDGSLQLDVGTFNLHALFREVLNLIKPVAAVKKLFVTLSLSSDFPEVAIGDEKRLMQILLNVVGNAVKFSKEGSVSVSAVNAKSESLIDPRAPEFFPVQSENHFYLRVQVKDTGSGINPQDFPKLFCKFAQNQEPATKNSAGTGLGLAICKRFVNLMEGHIWIESEGVGKGSTAIFIVKLGIPGRLNESKLPFTAGLPANHMQMTFQGLKVLVMDDNGFSRMVTKSLLVHLGCDVTTIGSGDECLRILTREHKVLIMDASITGMNCYDVAVSVHEKFGKRLERPLIVALTGNTDQVTKENCLRVGMDGVILKPVSIDKMRSVLSGLLEHGTVL.

3 consecutive transmembrane segments (helical) span residues 22-42 (ISDFFIAVAYFSIPIELVYFV), 53-73 (VLVQFGAFIVLCGATHLINLW), and 94-114 (AAVSCATAVMLVHIIPDLLSV). Residues Cys-64 and His-68 each coordinate Cu cation. The 149-residue stretch at 157–305 (DRHTILKTTL…VVADQVAVAL (149 aa)) folds into the GAF domain. A Histidine kinase domain is found at 348 to 585 (VMNHEMRTPM…TAIFIVKLGI (238 aa)). His-351 carries the phosphohistidine; by autocatalysis modification. A Response regulatory domain is found at 613–730 (KVLVMDDNGF…KMRSVLSGLL (118 aa)). Asp-661 is subject to 4-aspartylphosphate.

This sequence belongs to the ethylene receptor family. In terms of assembly, homodimer; disulfide-linked. It depends on Cu cation as a cofactor. Post-translationally, activation probably requires a transfer of a phosphate group between a His in the transmitter domain and an Asp of the receiver domain. In terms of tissue distribution, leaves, flowers and fruits.

Its subcellular location is the endoplasmic reticulum membrane. It carries out the reaction ATP + protein L-histidine = ADP + protein N-phospho-L-histidine.. May act early in the ethylene signal transduction pathway, possibly as an ethylene receptor, or as a regulator of the pathway. This is Ethylene receptor 2 (ETR2) from Solanum lycopersicum (Tomato).